Reading from the N-terminus, the 264-residue chain is MSLSKVSVENSLKPEKFVKISWVDKLLPNYFSILKYLSITDFSVVKAQSYESLVPVKLLRGVDLTKHLYVTLLGVVVSGVWNVPESCRGGATVALVDTRMHSVAEGTICKFSAPATVREFSVRFIPNYPVVAADALRDPWSLFVRLSNVGIKDGFHPLTLEVACLVATTNSIIKKGLRASVVESVVSSDQSIVLDSLSEKVEPFFDKVPISAAVMARDPSYRSRSQSVGGRGKRHSKPPNRRLDSASEESSSVSFEDGLQSDHT.

Residues 219–264 (PSYRSRSQSVGGRGKRHSKPPNRRLDSASEESSSVSFEDGLQSDHT) form a disordered region. The span at 231-240 (RGKRHSKPPN) shows a compositional bias: basic residues.

This sequence belongs to the tobamovirus movement protein family.

It localises to the host cytoplasm. It is found in the host cytoskeleton. Its subcellular location is the host cell junction. The protein resides in the host plasmodesma. Transports viral genome to neighboring plant cells directly through plasmosdesmata, without any budding. The movement protein allows efficient cell to cell propagation, by bypassing the host cell wall barrier. Forms a ribonucleoprotein complex with viral RNA. Binds microtubules and modulates microtubule stability. Can bind double-stranded DNA. The polypeptide is Movement protein (MP) (Cucumber green mottle mosaic virus (strain watermelon SH) (CGMMV)).